The primary structure comprises 499 residues: Glycerol kinase (499 aa).

Thr12 is a binding site for ADP. Positions 12, 13, and 14 each coordinate ATP. Residue Thr12 coordinates sn-glycerol 3-phosphate. An ADP-binding site is contributed by Arg16. Residues Arg82, Glu83, and Tyr134 each contribute to the sn-glycerol 3-phosphate site. Glycerol-binding residues include Arg82, Glu83, and Tyr134. His230 bears the Phosphohistidine; by HPr mark. Asp244 contacts sn-glycerol 3-phosphate. Asp244 and Gln245 together coordinate glycerol. Thr266 and Gly309 together coordinate ADP. Thr266, Gly309, Gln313, and Gly410 together coordinate ATP. ADP-binding residues include Gly410 and Asn414.

It belongs to the FGGY kinase family. Homotetramer and homodimer (in equilibrium). The phosphoenolpyruvate-dependent sugar phosphotransferase system (PTS), including enzyme I, and histidine-containing protein (HPr) are required for the phosphorylation, which leads to the activation of the enzyme.

The enzyme catalyses glycerol + ATP = sn-glycerol 3-phosphate + ADP + H(+). The protein operates within polyol metabolism; glycerol degradation via glycerol kinase pathway; sn-glycerol 3-phosphate from glycerol: step 1/1. Its activity is regulated as follows. Activated by phosphorylation and inhibited by fructose 1,6-bisphosphate (FBP). Key enzyme in the regulation of glycerol uptake and metabolism. Catalyzes the phosphorylation of glycerol to yield sn-glycerol 3-phosphate. This is Glycerol kinase from Staphylococcus epidermidis (strain ATCC 12228 / FDA PCI 1200).